Reading from the N-terminus, the 88-residue chain is Small ribosomal subunit protein uS19 (88 aa).

The protein belongs to the universal ribosomal protein uS19 family.

Protein S19 forms a complex with S13 that binds strongly to the 16S ribosomal RNA. This Chlamydia pneumoniae (Chlamydophila pneumoniae) protein is Small ribosomal subunit protein uS19 (rpsS).